A 298-amino-acid chain; its full sequence is Glutamyl-Q tRNA(Asp) synthetase (298 aa).

L-glutamate is bound by residues 9–13 and glutamate 45; that span reads RFAPS. Positions 12–22 match the 'HIGH' region motif; the sequence is PSPTGLLHAGS. Residues cysteine 101, cysteine 103, tyrosine 121, and cysteine 125 each contribute to the Zn(2+) site. L-glutamate is bound by residues tyrosine 179 and arginine 197. Residues 235-239 carry the 'KMSKS' region motif; sequence KLSKQ. Position 238 (lysine 238) interacts with ATP.

It belongs to the class-I aminoacyl-tRNA synthetase family. GluQ subfamily. The cofactor is Zn(2+).

In terms of biological role, catalyzes the tRNA-independent activation of glutamate in presence of ATP and the subsequent transfer of glutamate onto a tRNA(Asp). Glutamate is transferred on the 2-amino-5-(4,5-dihydroxy-2-cyclopenten-1-yl) moiety of the queuosine in the wobble position of the QUC anticodon. The chain is Glutamyl-Q tRNA(Asp) synthetase from Chromobacterium violaceum (strain ATCC 12472 / DSM 30191 / JCM 1249 / CCUG 213 / NBRC 12614 / NCIMB 9131 / NCTC 9757 / MK).